The chain runs to 65 residues: Alpha-insect toxin BotIT1 (65 aa).

One can recognise an LCN-type CS-alpha/beta domain in the interval 2–64; it reads RDAYIAQNYN…VPIRIPGKCH (63 aa). 4 cysteine pairs are disulfide-bonded: cysteine 12-cysteine 63, cysteine 16-cysteine 36, cysteine 22-cysteine 46, and cysteine 26-cysteine 48.

It belongs to the long (4 C-C) scorpion toxin superfamily. Sodium channel inhibitor family. Alpha subfamily. As to expression, expressed by the venom gland.

It is found in the secreted. In terms of biological role, alpha toxins bind voltage-independently at site-3 of sodium channels (Nav) and inhibit the inactivation of the activated channels, thereby blocking neuronal transmission. This contractive toxin is highly toxic to insects and barely toxic to mammals. This is Alpha-insect toxin BotIT1 from Buthus occitanus tunetanus (Common European scorpion).